Consider the following 309-residue polypeptide: Mitochondrial fission regulator 1-like (309 aa).

Residues 189–221 (DVTEEDEEEEEEEDREEEEEDVSELVPDPMPPV) form a disordered region. The segment covering 190-211 (VTEEDEEEEEEEDREEEEEDVS) has biased composition (acidic residues). Ser-253 carries the phosphoserine modification.

The protein belongs to the MTFR1 family.

The protein resides in the mitochondrion outer membrane. Functionally, mitochondrial protein required for adaptation of miochondrial dynamics to metabolic changes. Regulates mitochondrial morphology at steady state and mediates AMPK-dependent stress-induced mitochondrial fragmentation via the control of OPA1 levels. In Danio rerio (Zebrafish), this protein is Mitochondrial fission regulator 1-like (mtfr1l).